Consider the following 270-residue polypeptide: uncharacterized protein (270 aa).

The protein localises to the virion. This is an uncharacterized protein from Acanthamoeba polyphaga (Amoeba).